The primary structure comprises 1268 residues: ATP-dependent helicase/nuclease subunit A (1268 aa).

Residues 3–476 form the UvrD-like helicase ATP-binding domain; it reads TKWTEEQELA…IMLYKNFRSR (474 aa). 24–31 serves as a coordination point for ATP; sequence AAAGSGKT. A UvrD-like helicase C-terminal domain is found at 528–824; it reads IENLKVAGDI…RIMSIHKSKG (297 aa).

Belongs to the helicase family. AddA subfamily. In terms of assembly, heterodimer of AddA and AddB/RexB. The cofactor is Mg(2+).

The enzyme catalyses Couples ATP hydrolysis with the unwinding of duplex DNA by translocating in the 3'-5' direction.. The catalysed reaction is ATP + H2O = ADP + phosphate + H(+). In terms of biological role, the heterodimer acts as both an ATP-dependent DNA helicase and an ATP-dependent, dual-direction single-stranded exonuclease. Recognizes the chi site generating a DNA molecule suitable for the initiation of homologous recombination. The AddA nuclease domain is required for chi fragment generation; this subunit has the helicase and 3' -&gt; 5' nuclease activities. The polypeptide is ATP-dependent helicase/nuclease subunit A (Clostridium perfringens (strain 13 / Type A)).